Here is a 359-residue protein sequence, read N- to C-terminus: 3-dehydroquinate synthase (359 aa).

Residues 69 to 74 (SGESSK), 103 to 107 (GVVGD), 127 to 128 (TT), lysine 139, lysine 148, and 166 to 169 (TLST) each bind NAD(+). Positions 181, 242, and 259 each coordinate Zn(2+).

The protein belongs to the sugar phosphate cyclases superfamily. Dehydroquinate synthase family. NAD(+) is required as a cofactor. It depends on Co(2+) as a cofactor. The cofactor is Zn(2+).

It localises to the cytoplasm. The catalysed reaction is 7-phospho-2-dehydro-3-deoxy-D-arabino-heptonate = 3-dehydroquinate + phosphate. Its pathway is metabolic intermediate biosynthesis; chorismate biosynthesis; chorismate from D-erythrose 4-phosphate and phosphoenolpyruvate: step 2/7. Catalyzes the conversion of 3-deoxy-D-arabino-heptulosonate 7-phosphate (DAHP) to dehydroquinate (DHQ). The chain is 3-dehydroquinate synthase from Oceanobacillus iheyensis (strain DSM 14371 / CIP 107618 / JCM 11309 / KCTC 3954 / HTE831).